A 413-amino-acid polypeptide reads, in one-letter code: Monacolin J acid methylbutanoyltransferase (413 aa).

R73 lines the monacolin J pocket. The active-site Acyl-ester intermediate is S76. R173, Y188, and Y258 together coordinate monacolin J. G366 lines the 2-methylbutanoate pocket. Monacolin J is bound by residues E388 and W390.

The protein belongs to the class-A beta-lactamase family. Interacts with LovF.

It catalyses the reaction monacolin J carboxylate + (S)-2-methylbutanoyl-[2-methylbutanoate polyketide synthase] = lovastatin carboxylate + holo-[2-methylbutanoate polyketide synthase]. Its pathway is polyketide biosynthesis; lovastatin biosynthesis. Monacolin J acid methylbutanoyltransferase; part of the gene cluster that mediates the biosynthesis of lovastatin (also known as mevinolin, mevacor or monacolin K), a hypolipidemic inhibitor of (3S)-hydroxymethylglutaryl-coenzyme A (HMG-CoA) reductase (HMGR). The first step in the biosynthesis of lovastatin is the production of dihydromonacolin L acid by the lovastatin nonaketide synthase lovB and the trans-acting enoyl reductase lovC via condensation of one acetyl-CoA unit and 8 malonyl-CoA units. Dihydromonacolin L acid is released from lovB by the thioesterase lovG. Next, dihydromonacolin L acid is oxidized by the dihydromonacolin L monooxygenase lovA twice to form monacolin J acid. The 2-methylbutyrate moiety of lovastatin is synthesized by the lovastatin diketide synthase lovF via condensation of one acetyl-CoA unit and one malonyl-CoA unit. Finally, the covalent attachment of this moiety to monacolin J acid is catalyzed by the transesterase lovD to yield lovastatin. LovD has broad substrate specificity and can also convert monacolin J to simvastatin using alpha-dimethylbutanoyl-S-methyl-3-mercaptopropionate (DMB-S-MMP) as the thioester acyl donor, and can also catalyze the reverse reaction and function as hydrolase in vitro. LovD has much higher activity with LovF-bound 2-methylbutanoate than with free diketide substrates. This chain is Monacolin J acid methylbutanoyltransferase, found in Aspergillus terreus (strain NIH 2624 / FGSC A1156).